Reading from the N-terminus, the 1316-residue chain is DNA-directed RNA polymerase subunit beta' (1316 aa).

Zn(2+) contacts are provided by Cys-60, Cys-62, Cys-75, and Cys-78. 3 residues coordinate Mg(2+): Asp-535, Asp-537, and Asp-539. Zn(2+)-binding residues include Cys-891, Cys-968, Cys-975, and Cys-978.

Belongs to the RNA polymerase beta' chain family. As to quaternary structure, the RNAP catalytic core consists of 2 alpha, 1 beta, 1 beta' and 1 omega subunit. When a sigma factor is associated with the core the holoenzyme is formed, which can initiate transcription. Mg(2+) serves as cofactor. Requires Zn(2+) as cofactor.

It catalyses the reaction RNA(n) + a ribonucleoside 5'-triphosphate = RNA(n+1) + diphosphate. In terms of biological role, DNA-dependent RNA polymerase catalyzes the transcription of DNA into RNA using the four ribonucleoside triphosphates as substrates. This Mycolicibacterium paratuberculosis (strain ATCC BAA-968 / K-10) (Mycobacterium paratuberculosis) protein is DNA-directed RNA polymerase subunit beta'.